The primary structure comprises 247 residues: Probable transcriptional regulatory protein lpg1286 (247 aa).

It belongs to the TACO1 family.

It is found in the cytoplasm. This chain is Probable transcriptional regulatory protein lpg1286, found in Legionella pneumophila subsp. pneumophila (strain Philadelphia 1 / ATCC 33152 / DSM 7513).